The chain runs to 228 residues: MGQKVHPVGIRLGIVKDHTSVWYADGRNYADYLNADLKVRAYLQDKLKSASVSRIDIARPAQTARITIHTARPGIVIGKKGEDVEKLRQDLTKQMGVPVHINIEEIRKPELDGMLVAQSVAQQLERRVMFRRAMKRAVQNAMRIGAKGIKIQVSGRLGGAEIARTEWYREGRVPLHTLRADIDYATYEAHTTYGVIGVKVWIFKGEVIGGRTEELKPQAPAPRKAAKK.

The KH type-2 domain maps to 39 to 107 (VRAYLQDKLK…PVHINIEEIR (69 aa)).

This sequence belongs to the universal ribosomal protein uS3 family. Part of the 30S ribosomal subunit. Forms a tight complex with proteins S10 and S14.

In terms of biological role, binds the lower part of the 30S subunit head. Binds mRNA in the 70S ribosome, positioning it for translation. In Ectopseudomonas mendocina (strain ymp) (Pseudomonas mendocina), this protein is Small ribosomal subunit protein uS3.